The sequence spans 341 residues: MEPAFGEVNQLGGVFVNGRPLPNAIRLRIVELAQLGIRPCDISRQLRVSHGCVSKILARYNETGSILPGAIGGSKPRVTTPTVVKHIRTYKQRDPGIFAWEIRDRLLADGVCDKYNVPSVSSISRILRNKIGNLAQQGHYDSYKQHQPAPQPALPYNHIYSYPSPITAAAAKVPTPPGVPAIPGSVAMPRTWPSSHSVTDILGIRSITDQVSDSSPYHSPKVEEWSSLGRNNFPAAAPHAVNGLEKGALEQEAKYGQAPNGLPAVSSFVSASSMAPYPTPAQVSPYMTYSAAPSGYVAGHGWQHAGGTPLSPHNCDIPASLAFKGMQAAREGSHSVTASAL.

The segment at residues 4 to 130 (AFGEVNQLGG…SSISRILRNK (127 aa)) is a DNA-binding region (paired). Positions 7–63 (EVNQLGGVFVNGRPLPNAIRLRIVELAQLGIRPCDISRQLRVSHGCVSKILARYNET) are PAI subdomain. Residues 82-130 (TVVKHIRTYKQRDPGIFAWEIRDRLLADGVCDKYNVPSVSSISRILRNK) form an RED subdomain region. Residues 168-189 (AAAAKVPTPPGVPAIPGSVAMP) are interaction with KDM5B.

As to quaternary structure, interacts with KDM5B.

The protein localises to the nucleus. Its function is as follows. Transcription factor required for normal development of thymus, parathyroid glands, ultimobranchial bodies, teeth, skeletal elements of skull and larynx as well as distal limbs. This chain is Paired box protein Pax-9 (PAX9), found in Daubentonia madagascariensis (Aye-aye).